A 494-amino-acid polypeptide reads, in one-letter code: MSGSAVVLCILDGWGNGNGDECDAIHAARKPFWESVVSGCPRSSLSASGEDVGLPAAQVGNSEVGHISLGAGRVVLQDLQRINAEIGEIHSNPYLLQFAEAIKNGRGVCHIMGLLSDGGVHGLQDHITQLARVLAELRIKVLIHAFLDGRDVSPRSAKKHVTALNDAVHSYDISIATISGRYYAMDRDHRLDRTEKAYEAIALARGPRYRDAMTAIESSYSEGISDEFLVPSVIGDYQGFSPKDGILLTNFRSDRIVQILSMILHRSQEVSNILGMVRYSEKIQVPSLFPPRNICNTLGEVVSKCGLKQLRIAETEKYAHVTFFFSGGKEEPFPGEDRVIIPSPQVSTYDLQPEMSAFPMTEVLVERIESRQYSLIVVNYANADMVGHTGNLEAVKKAISVIDACLQMVFNAAKKAGATMLITADHGNAEKMFDMRGTPFTAHTSNTVPLVLCNCDKRFGLVDGRLCDVAPTILELMEIAKPDEMTGSSLLTPE.

Residues aspartate 12 and serine 62 each coordinate Mn(2+). Catalysis depends on serine 62, which acts as the Phosphoserine intermediate. Residues histidine 121, 150 to 151 (RD), arginine 181, arginine 187, 252 to 255 (RSDR), and lysine 317 each bind substrate. Residues aspartate 384, histidine 388, aspartate 425, histidine 426, and histidine 443 each contribute to the Mn(2+) site.

Belongs to the BPG-independent phosphoglycerate mutase family. As to quaternary structure, monomer. The cofactor is Mn(2+).

The enzyme catalyses (2R)-2-phosphoglycerate = (2R)-3-phosphoglycerate. It participates in carbohydrate degradation; glycolysis; pyruvate from D-glyceraldehyde 3-phosphate: step 3/5. Catalyzes the interconversion of 2-phosphoglycerate and 3-phosphoglycerate. The sequence is that of 2,3-bisphosphoglycerate-independent phosphoglycerate mutase from Anaplasma marginale (strain St. Maries).